Here is a 561-residue protein sequence, read N- to C-terminus: Solute carrier family 41 member 2 (561 aa).

Over methionine 1 to glutamine 150 the chain is Extracellular. The chain crosses the membrane as a helical span at residues isoleucine 151–isoleucine 171. The Cytoplasmic segment spans residues valine 172 to glutamate 183. Residues valine 184 to serine 204 form a helical membrane-spanning segment. Over arginine 205–glutamine 233 the chain is Extracellular. Residues valine 234–proline 254 form a helical membrane-spanning segment. Residues aspartate 255 to serine 270 lie on the Cytoplasmic side of the membrane. Residues valine 271–glycine 291 traverse the membrane as a helical segment. Residues serine 292 to asparagine 301 are Extracellular-facing. The helical transmembrane segment at valine 302 to isoleucine 322 threads the bilayer. At serine 323–tyrosine 333 the chain is on the cytoplasmic side. The chain crosses the membrane as a helical span at residues alanine 334–isoleucine 354. Over alanine 355–valine 364 the chain is Extracellular. Residues leucine 365–isoleucine 385 traverse the membrane as a helical segment. At leucine 386–asparagine 394 the chain is on the cytoplasmic side. The helical transmembrane segment at leucine 395–isoleucine 415 threads the bilayer. Residues glutamine 416–alanine 457 are Extracellular-facing. Residues glutamine 458 to methionine 478 form a helical membrane-spanning segment. At lysine 479–proline 487 the chain is on the cytoplasmic side. A helical membrane pass occupies residues isoleucine 488–alanine 508. The Extracellular segment spans residues aspartate 509–threonine 531. Residues alanine 532–isoleucine 552 form a helical membrane-spanning segment. Residues glycine 553–aspartate 561 lie on the Cytoplasmic side of the membrane.

Belongs to the SLC41A transporter family.

It localises to the cell membrane. The catalysed reaction is Mg(2+)(in) = Mg(2+)(out). It carries out the reaction Mn(2+)(in) = Mn(2+)(out). The enzyme catalyses Co(2+)(in) = Co(2+)(out). It catalyses the reaction Ni(2+)(in) = Ni(2+)(out). The catalysed reaction is Fe(2+)(in) = Fe(2+)(out). Acts as a plasma-membrane magnesium transporter. Can also mediate the transport of other divalent metal cations in an order of Ba(2+) &gt; Ni(2+) &gt; Co(2+) &gt; Fe(2+) &gt; Mn(2+). The chain is Solute carrier family 41 member 2 (slc41a2) from Xenopus laevis (African clawed frog).